Reading from the N-terminus, the 267-residue chain is Orotidine 5'-phosphate decarboxylase (267 aa).

Ser2 bears the N-acetylserine mark. Substrate contacts are provided by residues Asp37, 59 to 61 (KTH), and 91 to 100 (DRKFADIGNT). Lys93 acts as the Proton donor in catalysis. Glycyl lysine isopeptide (Lys-Gly) (interchain with G-Cter in ubiquitin) cross-links involve residues Lys93 and Lys209. Positions 217 and 235 each coordinate substrate. Residue Lys253 forms a Glycyl lysine isopeptide (Lys-Gly) (interchain with G-Cter in ubiquitin) linkage.

This sequence belongs to the OMP decarboxylase family.

The enzyme catalyses orotidine 5'-phosphate + H(+) = UMP + CO2. It participates in pyrimidine metabolism; UMP biosynthesis via de novo pathway; UMP from orotate: step 2/2. The sequence is that of Orotidine 5'-phosphate decarboxylase (URA3) from Saccharomyces cerevisiae (strain ATCC 204508 / S288c) (Baker's yeast).